We begin with the raw amino-acid sequence, 80 residues long: MSFEVFEKLEAKVQQAIDTITLLQMEIEELKEKNNQLNQEVQQAASNREGLLRENEQLKHEQEAWQERLRALLGKMNEVN.

Residues 3-80 (FEVFEKLEAK…ALLGKMNEVN (78 aa)) are a coiled coil.

It belongs to the ZapB family. Homodimer. The ends of the coiled-coil dimer bind to each other, forming polymers. Interacts with FtsZ.

The protein localises to the cytoplasm. Functionally, non-essential, abundant cell division factor that is required for proper Z-ring formation. It is recruited early to the divisome by direct interaction with FtsZ, stimulating Z-ring assembly and thereby promoting cell division earlier in the cell cycle. Its recruitment to the Z-ring requires functional FtsA or ZipA. This chain is Cell division protein ZapB, found in Edwardsiella ictaluri (strain 93-146).